The sequence spans 127 residues: UPF0102 protein Reut_A3265 (127 aa).

This sequence belongs to the UPF0102 family.

This chain is UPF0102 protein Reut_A3265, found in Cupriavidus pinatubonensis (strain JMP 134 / LMG 1197) (Cupriavidus necator (strain JMP 134)).